The following is a 111-amino-acid chain: Large ribosomal subunit protein uL22 (111 aa).

This sequence belongs to the universal ribosomal protein uL22 family. In terms of assembly, part of the 50S ribosomal subunit.

In terms of biological role, this protein binds specifically to 23S rRNA; its binding is stimulated by other ribosomal proteins, e.g. L4, L17, and L20. It is important during the early stages of 50S assembly. It makes multiple contacts with different domains of the 23S rRNA in the assembled 50S subunit and ribosome. Functionally, the globular domain of the protein is located near the polypeptide exit tunnel on the outside of the subunit, while an extended beta-hairpin is found that lines the wall of the exit tunnel in the center of the 70S ribosome. The polypeptide is Large ribosomal subunit protein uL22 (Polynucleobacter necessarius subsp. necessarius (strain STIR1)).